The primary structure comprises 147 residues: Hemoglobin subunit beta (147 aa).

Val2 carries the N-acetylvaline modification. The Globin domain maps to 3–147 (HLTGEEKGIV…VATALAHKYH (145 aa)). At Thr13 the chain carries Phosphothreonine. At Ser45 the chain carries Phosphoserine. The residue at position 60 (Lys60) is an N6-acetyllysine. Position 64 (His64) interacts with heme b. Position 83 is an N6-acetyllysine (Lys83). His93 provides a ligand contact to heme b. Cys94 carries the S-nitrosocysteine modification. At Lys145 the chain carries N6-acetyllysine.

Belongs to the globin family. As to quaternary structure, heterotetramer of two alpha chains and two beta chains. As to expression, red blood cells.

In terms of biological role, involved in oxygen transport from the lung to the various peripheral tissues. The polypeptide is Hemoglobin subunit beta (HBB) (Rhinolophus ferrumequinum (Greater horseshoe bat)).